The sequence spans 346 residues: Methylthioribose-1-phosphate isomerase (346 aa).

Substrate is bound by residues 48–50 (RGA), Arg91, and Gln200. The active-site Proton donor is Asp241. Residue 251–252 (NK) participates in substrate binding.

This sequence belongs to the eIF-2B alpha/beta/delta subunits family. MtnA subfamily.

The catalysed reaction is 5-(methylsulfanyl)-alpha-D-ribose 1-phosphate = 5-(methylsulfanyl)-D-ribulose 1-phosphate. It functions in the pathway amino-acid biosynthesis; L-methionine biosynthesis via salvage pathway; L-methionine from S-methyl-5-thio-alpha-D-ribose 1-phosphate: step 1/6. Its function is as follows. Catalyzes the interconversion of methylthioribose-1-phosphate (MTR-1-P) into methylthioribulose-1-phosphate (MTRu-1-P). The polypeptide is Methylthioribose-1-phosphate isomerase (Picosynechococcus sp. (strain ATCC 27264 / PCC 7002 / PR-6) (Agmenellum quadruplicatum)).